Here is a 278-residue protein sequence, read N- to C-terminus: UPF0276 protein Shew_2240 (278 aa).

This sequence belongs to the UPF0276 family.

The polypeptide is UPF0276 protein Shew_2240 (Shewanella loihica (strain ATCC BAA-1088 / PV-4)).